We begin with the raw amino-acid sequence, 720 residues long: MAPPRNVVKIAVQMSDAIPQLIQLDQAKPLATVLKEVCDAWSLTHPEHYALQFADGHRKYITENNRLEIKNGSILCLSTAPDLKAQQLLGRLQNTSREGCCEVLRNLVLLASDMTFAQEVISRDGLQKLSTIIENGDDLGEMLALGLRAFLELMEHGVVSWETLSISFVRKVISYVNMNLMDASVQPLALRLLESVTLSSPALGQLVKSEVPLDRLLVHLQVMNHQLQTKAMALLTALLQGASPTERKEMLDHLWKKNLRQFIYKNIIHSATPMGDEMAHHLYVLQALTLGLLEPRMRTPLDPYSQEQRDQLQALRQAAFEPEGESLGTGLSADRRRSLCVREFRKLGFSNSNPAQDLERVPPGLLALDNMLYFSRHAPSAYSRFVLENSSREDKHECPFARSSIQLTALLCELLRVGEPCSETAQDFSPMFFSQDHSFHELFCVAIQLLNKTWKEMRATQEDFDKVMQVVREQLARTLALKPTSLELFRTKVNALTYGEVLRLRQTERLHQEGTLAPPILELREKLKPELMGLIRQQRLLRLCEGMLFRKISSRRRQDKLWFCCLSPNHKVLQYGDVEEGAKPPTLESLPEQLPVADIRALLMGKDCPHVREKGSGKQNKDLYELAFSISYDHGEEEAYLNFIAPSKRDFYLWTDGLSALLGSTMGSELTRLDLEQLLTMETKLRLLELENVPIPEQPPPVPPPPTNFNFCYDYSITEP.

The ELMO domain occupies 307-479 (EQRDQLQALR…VVREQLARTL (173 aa)). One can recognise a PH domain in the interval 542-664 (RLCEGMLFRK…TDGLSALLGS (123 aa)). Positions 696 to 706 (PEQPPPVPPPP) match the SH3-binding motif.

Probably interacts directly with the SH3-domain of DOCK1 via its SH3-binding site. Part of a complex with DOCK1 and RAC1. Interacts with ADGRB3.

Its subcellular location is the cytoplasm. In terms of biological role, involved in cytoskeletal rearrangements required for phagocytosis of apoptotic cells and cell motility. Acts in association with DOCK1 and CRK. Was initially proposed to be required in complex with DOCK1 to activate Rac Rho small GTPases. May enhance the guanine nucleotide exchange factor (GEF) activity of DOCK1. The chain is Engulfment and cell motility protein 3 (Elmo3) from Mus musculus (Mouse).